A 387-amino-acid polypeptide reads, in one-letter code: Alkanesulfonate monooxygenase (387 aa).

Belongs to the SsuD family.

The catalysed reaction is an alkanesulfonate + FMNH2 + O2 = an aldehyde + FMN + sulfite + H2O + 2 H(+). Functionally, catalyzes the desulfonation of aliphatic sulfonates. The chain is Alkanesulfonate monooxygenase from Ralstonia pickettii (strain 12J).